Here is a 163-residue protein sequence, read N- to C-terminus: Nucleotide-binding protein BSU11020 (163 aa).

It belongs to the YajQ family.

In terms of biological role, nucleotide-binding protein. The protein is Nucleotide-binding protein BSU11020 (yitK) of Bacillus subtilis (strain 168).